The following is a 379-amino-acid chain: Cytochrome b (379 aa).

The next 4 helical transmembrane spans lie at 33–53 (FGSLLGICLAVQILTGLFLAM), 77–98 (WILRYLHANGASMFFICLYIHV), 113–133 (WNIGVILLFAVMATAFMGYVL), and 178–198 (FFAFHFLLPFIISAMVMVHLL). H83 and H97 together coordinate heme b. H182 and H196 together coordinate heme b. H201 provides a ligand contact to a ubiquinone. 4 consecutive transmembrane segments (helical) span residues 226-246 (IKDILGLLLMIMVLLMLVLFS), 288-308 (LGGVMALVLSILILIIIPVLH), 320-340 (LSQCLFWLLVADLLXVTWIGG), and 347-367 (YVIXGQLASIXXXXIXIXXXX).

Belongs to the cytochrome b family. As to quaternary structure, the cytochrome bc1 complex contains 11 subunits: 3 respiratory subunits (MT-CYB, CYC1 and UQCRFS1), 2 core proteins (UQCRC1 and UQCRC2) and 6 low-molecular weight proteins (UQCRH/QCR6, UQCRB/QCR7, UQCRQ/QCR8, UQCR10/QCR9, UQCR11/QCR10 and a cleavage product of UQCRFS1). This cytochrome bc1 complex then forms a dimer. It depends on heme b as a cofactor.

It localises to the mitochondrion inner membrane. Its function is as follows. Component of the ubiquinol-cytochrome c reductase complex (complex III or cytochrome b-c1 complex) that is part of the mitochondrial respiratory chain. The b-c1 complex mediates electron transfer from ubiquinol to cytochrome c. Contributes to the generation of a proton gradient across the mitochondrial membrane that is then used for ATP synthesis. This Myotis goudotii (Malagasy mouse-eared bat) protein is Cytochrome b (MT-CYB).